We begin with the raw amino-acid sequence, 221 residues long: 7-cyano-7-deazaguanine synthase (221 aa).

9-19 is a binding site for ATP; it reads YSGGMDSFTLL. Zn(2+)-binding residues include Cys185, Cys193, Cys196, and Cys199.

Belongs to the QueC family. Zn(2+) is required as a cofactor.

It catalyses the reaction 7-carboxy-7-deazaguanine + NH4(+) + ATP = 7-cyano-7-deazaguanine + ADP + phosphate + H2O + H(+). The protein operates within purine metabolism; 7-cyano-7-deazaguanine biosynthesis. Catalyzes the ATP-dependent conversion of 7-carboxy-7-deazaguanine (CDG) to 7-cyano-7-deazaguanine (preQ(0)). This is 7-cyano-7-deazaguanine synthase from Marinobacter nauticus (strain ATCC 700491 / DSM 11845 / VT8) (Marinobacter aquaeolei).